The chain runs to 125 residues: Protein Turandot F (125 aa).

The first 19 residues, methionine 1–alanine 19, serve as a signal peptide directing secretion.

The protein belongs to the Turandot family.

It localises to the secreted. In terms of biological role, a humoral factor that may play a role in stress tolerance. In Drosophila melanogaster (Fruit fly), this protein is Protein Turandot F.